The sequence spans 317 residues: Thymidylate synthase (317 aa).

Residues Arg24 and 179–180 (RR) contribute to the dUMP site. The Nucleophile role is filled by Cys199. Residues 219–222 (RSAD), Asn230, and 260–262 (HIY) each bind dUMP. A (6R)-5,10-methylene-5,6,7,8-tetrahydrofolate-binding site is contributed by Asp222. (6R)-5,10-methylene-5,6,7,8-tetrahydrofolate is bound at residue Ala316.

Belongs to the thymidylate synthase family. Bacterial-type ThyA subfamily. As to quaternary structure, homodimer.

Its subcellular location is the cytoplasm. The catalysed reaction is dUMP + (6R)-5,10-methylene-5,6,7,8-tetrahydrofolate = 7,8-dihydrofolate + dTMP. Its pathway is pyrimidine metabolism; dTTP biosynthesis. Functionally, catalyzes the reductive methylation of 2'-deoxyuridine-5'-monophosphate (dUMP) to 2'-deoxythymidine-5'-monophosphate (dTMP) while utilizing 5,10-methylenetetrahydrofolate (mTHF) as the methyl donor and reductant in the reaction, yielding dihydrofolate (DHF) as a by-product. This enzymatic reaction provides an intracellular de novo source of dTMP, an essential precursor for DNA biosynthesis. The protein is Thymidylate synthase of Oceanobacillus iheyensis (strain DSM 14371 / CIP 107618 / JCM 11309 / KCTC 3954 / HTE831).